A 466-amino-acid chain; its full sequence is Argininosuccinate lyase (466 aa).

This sequence belongs to the lyase 1 family. Argininosuccinate lyase subfamily.

The protein localises to the cytoplasm. The enzyme catalyses 2-(N(omega)-L-arginino)succinate = fumarate + L-arginine. It participates in amino-acid biosynthesis; L-arginine biosynthesis; L-arginine from L-ornithine and carbamoyl phosphate: step 3/3. This chain is Argininosuccinate lyase, found in Bartonella bacilliformis (strain ATCC 35685 / KC583 / Herrer 020/F12,63).